A 147-amino-acid polypeptide reads, in one-letter code: Hemoglobin subunit gamma-2 (147 aa).

A Globin domain is found at 3-147 (NFTAEDKAAI…VASALGSRYH (145 aa)). Thr-13 carries the post-translational modification Phosphothreonine. 3 positions are modified to phosphoserine: Ser-45, Ser-51, and Ser-53. An N6-acetyllysine modification is found at Lys-60. Residue His-64 coordinates heme b. At Lys-83 the chain carries N6-acetyllysine. His-93 lines the heme b pocket. The residue at position 94 (Cys-94) is an S-nitrosocysteine. Phosphoserine is present on residues Ser-140 and Ser-144.

The protein belongs to the globin family. Heterotetramer of two alpha chains and two gamma chains in fetal hemoglobin (Hb F). Red blood cells.

Functionally, gamma chains make up the fetal hemoglobin F, in combination with alpha chains. The polypeptide is Hemoglobin subunit gamma-2 (HBG2) (Cebus albifrons (White-fronted capuchin)).